The following is a 499-amino-acid chain: Citrinin biosynthesis cluster MFS transporter mrr1 (499 aa).

A disordered region spans residues 1–29 (MKEEIDAPVSTDASGTDLENARDQPSGEK). Helical transmembrane passes span 58 to 78 (SLITCIFSTLTIWVTFSSSVF), 95 to 115 (VMTLGTSLTVLGFTVGPLVWG), 124 to 144 (LKPLYIGYAIFIIFQVPVAVA), 155 to 175 (FFLGFFGTSALAIIPGALADF), 187 to 207 (LFSAATFVGPIFGPIIGGFIV), 215 to 235 (WTAWITMIPASFFGIIAFLTL), 291 to 311 (ILVCMTIYISLIYGILYLFFV), and 327 to 347 (GIAALPFLGILVGVLMGCLLV). A glycan (N-linked (GlcNAc...) asparagine) is linked at Asn361. 4 helical membrane passes run 370–390 (LPPMIVAAILLPIGLFWFGWT), 395–415 (ISWAPQAIAGAPIGMGILMIW), 443–463 (AVGAAFPLFATAMYHKLGVDW), and 467–487 (LLGFLSIAMIPIPVIFYFYGA).

This sequence belongs to the major facilitator superfamily. CAR1 family.

The protein resides in the membrane. MFS transporter; part of the gene cluster that mediates the biosynthesis the mycotoxin citrinin, a hepato-nephrotoxic compound to humans due to inhibition of respiration complex III. This is Citrinin biosynthesis cluster MFS transporter mrr1 from Monascus ruber (Mold).